The sequence spans 423 residues: Anhydromevalonate phosphate decarboxylase (423 aa).

N134 and E197 together coordinate Mn(2+). Catalysis depends on D245, which acts as the Proton acceptor.

This sequence belongs to the UbiD family. Prenylated FMN is required as a cofactor. It depends on Mn(2+) as a cofactor.

The catalysed reaction is (2E)-3-methyl-5-phosphooxypent-2-enoate + H(+) = isopentenyl phosphate + CO2. The protein operates within isoprenoid biosynthesis; isopentenyl diphosphate biosynthesis via mevalonate pathway. Functionally, catalyzes the conversion of trans-anhydromevalonate 5-phosphate (tAHMP) into isopentenyl phosphate. Involved in the archaeal mevalonate (MVA) pathway, which provides fundamental precursors for isoprenoid biosynthesis, such as isopentenyl diphosphate (IPP) and dimethylallyl diphosphate (DMAPP). In Methanothermobacter thermautotrophicus (strain ATCC 29096 / DSM 1053 / JCM 10044 / NBRC 100330 / Delta H) (Methanobacterium thermoautotrophicum), this protein is Anhydromevalonate phosphate decarboxylase.